A 125-amino-acid chain; its full sequence is MATFKLVISDPKSGIAKQVEITGAETEKLIGKRIGDQIPAKELNINLNELFGKEFPEDVKLEIRGGTDKDGFPMRPDIHGPRRVRVLLSKGPGFRPKEKGERRKKTVRGNTISPEIVQVNVKLVY.

Residues 90–109 are disordered; sequence KGPGFRPKEKGERRKKTVRG.

The protein belongs to the eukaryotic ribosomal protein eS6 family. Part of the 30S ribosomal subunit.

This chain is Small ribosomal subunit protein eS6, found in Pyrococcus furiosus (strain ATCC 43587 / DSM 3638 / JCM 8422 / Vc1).